The chain runs to 822 residues: Cation/H(+) antiporter 3 (822 aa).

12 consecutive transmembrane segments (helical) span residues 55 to 75, 116 to 136, 150 to 170, 190 to 210, 224 to 244, 274 to 294, 305 to 325, 331 to 351, 362 to 382, 388 to 408, 418 to 438, and 447 to 467; these read FPHL…LHFF, EIVF…LMGV, AITI…VIFF, YVVI…NLLF, ISSA…LIFM, IVVL…FYII, AIYL…ANWC, MGPF…SAII, FLPF…LFGW, IILI…VPAL, FALS…YALA, and ETFT…PPIL.

It belongs to the monovalent cation:proton antiporter 2 (CPA2) transporter (TC 2.A.37) family. CHX (TC 2.A.37.4) subfamily.

It is found in the membrane. Its function is as follows. May operate as a cation/H(+) antiporter. The polypeptide is Cation/H(+) antiporter 3 (CHX3) (Arabidopsis thaliana (Mouse-ear cress)).